We begin with the raw amino-acid sequence, 196 residues long: Agamous-like MADS-box protein AGL27 (196 aa).

The MADS-box domain maps to 1–61; it reads MGRRKIEIKR…GKLYDSSSGD (61 aa). One can recognise a K-box domain in the interval 80–170; the sequence is ALDLEEKIQN…ASQMGKNTLL (91 aa). The interval 175-196 is disordered; it reads ERGMFPGSSSGNKIPETLPLLN.

Interacts with AGL39, AGL97 and AGL74. As to expression, expressed in most plant tissues, embryo, seedlings, roots, leaves, stems, inflorescence, pollen, siliques and flowers.

It is found in the nucleus. In terms of biological role, probable transcription factor involved in the negative regulation of flowering time in both long and short days, probably through the photoperiodic and vernalization pathways. Prevents premature flowering. The protein is Agamous-like MADS-box protein AGL27 (AGL27) of Arabidopsis thaliana (Mouse-ear cress).